The following is a 65-amino-acid chain: Large ribosomal subunit protein bL35 (65 aa).

Residues 1-22 (MPKIKTVRGAAKRFKKTGKGGF) are disordered. The segment covering 10–22 (AAKRFKKTGKGGF) has biased composition (basic residues).

This sequence belongs to the bacterial ribosomal protein bL35 family.

This chain is Large ribosomal subunit protein bL35, found in Klebsiella pneumoniae (strain 342).